The primary structure comprises 188 residues: F-box only protein 36 (188 aa).

The F-box domain maps to 91 to 137 (FDYLERLSDRLLLKIICYLDLEDIASLSQTSSKFEKLCKSDLLWEQI).

As to quaternary structure, directly interacts with SKP1 and CUL1.

Its function is as follows. Substrate-recognition component of the SCF (SKP1-CUL1-F-box protein)-type E3 ubiquitin ligase complex. The sequence is that of F-box only protein 36 (Fbxo36) from Mus musculus (Mouse).